We begin with the raw amino-acid sequence, 177 residues long: MSRIGKKPVVIPAGVTAKVEGQAISVKGGKGELHFTAPDYVSVALEGTQIAVSPRSEDKKARAAWGMTRSIVNNLVIGVSQGFERKLEITGVGYKAAVQGKNLQLSLGYSHDISFPIPDGIAIAAPKPTEVSITGIDKQRVGQIAAEIRALRPPEPYKGKGVKYAGEFIFRKEGKKK.

The protein belongs to the universal ribosomal protein uL6 family. As to quaternary structure, part of the 50S ribosomal subunit.

In terms of biological role, this protein binds to the 23S rRNA, and is important in its secondary structure. It is located near the subunit interface in the base of the L7/L12 stalk, and near the tRNA binding site of the peptidyltransferase center. In Beijerinckia indica subsp. indica (strain ATCC 9039 / DSM 1715 / NCIMB 8712), this protein is Large ribosomal subunit protein uL6.